Reading from the N-terminus, the 314-residue chain is SERTA domain-containing protein 2 (314 aa).

The region spanning 33–80 (YTLQRQTIFNISLMKLYNHRPLTEPSLQKTVLINNMLRRIQEELKQEG) is the SERTA domain. Disordered regions lie at residues 77 to 119 (KQEG…HPCD) and 181 to 222 (PTST…SKLM). Residues 87-97 (TPSSQPTTEPS) are compositionally biased toward polar residues. The segment covering 182-193 (TSTSTEAATAAT) has biased composition (low complexity). Positions 210 to 221 (GPQESRADDSKL) are enriched in basic and acidic residues. The interval 235 to 311 (TGFLTDLTLD…TELDHIMEVL (77 aa)) is required for transactivation activity. A Nuclear export signal (NES) motif is present at residues 238 to 243 (LTDLTL).

Interacts with XPO1; which mediates nuclear export. Interacts with TFDP1; modulates transactivation activity of TFDP1/E2F complexes. In terms of processing, polyubiquitinated, which promotes proteasomal degradation. As to expression, expressed in adipose tissue.

The protein localises to the nucleus. It is found in the cytoplasm. In terms of biological role, acts at E2F-responsive promoters as coregulator to integrate signals provided by PHD- and/or bromodomain-containing transcription factors. May act as coactivator as well as corepressor of E2F1-TFDP1 and E2F4-TFDP1 complexes on E2F consensus binding sites, which would activate or inhibit E2F-target genes expression. Modulates fat storage by down-regulating the expression of key genes involved in adipocyte lipolysis, thermogenesis and oxidative metabolism. The protein is SERTA domain-containing protein 2 (SERTAD2) of Homo sapiens (Human).